We begin with the raw amino-acid sequence, 624 residues long: Alpha-amylase 1 (624 aa).

An N-terminal signal peptide occupies residues 1-28 (MLLINFFIAVLGVISLSPIVVARYILRR). The CBM21 domain maps to 40-133 (ESVTGSNHVQ…SDTSVTYTTS (94 aa)). The cysteines at positions 177 and 185 are disulfide-linked. A substrate-binding site is contributed by Trp-230. Asn-268 serves as a coordination point for Ca(2+). His-269 contacts substrate. Cys-297 and Cys-311 are oxidised to a cystine. Asn-304 carries N-linked (GlcNAc...) asparagine glycosylation. Ca(2+) is bound by residues Glu-309 and Asp-322. N-linked (GlcNAc...) asparagine glycosylation occurs at Asn-344. Residue Arg-351 coordinates substrate. Ca(2+) is bound by residues Asp-353, His-357, and Glu-377. Asp-353 functions as the Nucleophile in the catalytic mechanism. Substrate is bound at residue 356 to 357 (KH). Glu-377 serves as the catalytic Proton donor. Gly-381 is a binding site for substrate. Cys-387 and Cys-430 are oxidised to a cystine. Residues Asp-444 and Arg-491 each contribute to the substrate site. An intrachain disulfide couples Cys-587 to Cys-622.

This sequence belongs to the glycosyl hydrolase 13 family. Requires Ca(2+) as cofactor.

It localises to the secreted. The catalysed reaction is Endohydrolysis of (1-&gt;4)-alpha-D-glucosidic linkages in polysaccharides containing three or more (1-&gt;4)-alpha-linked D-glucose units.. The chain is Alpha-amylase 1 (LKA1) from Lipomyces kononenkoae (Yeast).